A 176-amino-acid chain; its full sequence is Insulin-like growth factor 1 (176 aa).

The segment at Gly45–Thr73 is b. Disulfide bonds link Cys50-Cys92, Cys62-Cys105, and Cys91-Cys96. The c stretch occupies residues Gly74–Arg85. The tract at residues Gly86–Ala106 is a. A d region spans residues Pro107–Ala114. Residues Arg115 to Met176 constitute a propeptide, e peptide. A disordered region spans residues Arg115–Met176. Residues Arg140–Gln161 are compositionally biased toward basic and acidic residues.

Belongs to the insulin family.

The protein resides in the secreted. Functionally, the insulin-like growth factors, isolated from plasma, are structurally and functionally related to insulin but have a much higher growth-promoting activity. Acts as a ligand for IGF1R. Binds to the alpha subunit of IGF1R, leading to the activation of the intrinsic tyrosine kinase activity which autophosphorylates tyrosine residues in the beta subunit thus initiatiating a cascade of down-stream signaling events leading to activation of the PI3K-AKT/PKB and the Ras-MAPK pathways. Binds to integrins. Its binding to integrins and subsequent ternary complex formation with integrins and IGFR1 are essential for IGF1 signaling. This Oncorhynchus mykiss (Rainbow trout) protein is Insulin-like growth factor 1.